We begin with the raw amino-acid sequence, 611 residues long: RAC serine/threonine-protein kinase (611 aa).

Residues 14–25 (VVASAPAPGSAS) show a composition bias toward low complexity. Disordered regions lie at residues 14-33 (VVAS…SPTT) and 45-88 (QSTH…NTTF). A Phosphoserine modification is found at Ser30. The 106-residue stretch at 106 to 211 (QVVKEGWLMK…WTEAIRNVSS (106 aa)) folds into the PH domain. The Protein kinase domain maps to 266–523 (FEFLKVLGKG…VKEIQAHPFF (258 aa)). ATP-binding positions include 272-280 (LGKGTFGKV) and Lys295. The Proton acceptor role is filled by Asp389. The AGC-kinase C-terminal domain maps to 524–597 (ASINWTDLVL…QGDMASTLGT (74 aa)). Ser586 is modified (phosphoserine).

The protein belongs to the protein kinase superfamily. AGC Ser/Thr protein kinase family. RAC subfamily. In terms of assembly, interacts with trbl. Phosphorylated and activated by Pk61C/PDK1. Phosphorylated on Ser-586 by the TORC2 complex. As to expression, ubiquitously expressed. Present in ovary, where it is concentrated at the basal side of follicle cells.

The protein localises to the cytoplasm. It is found in the cytosol. It localises to the cell membrane. It catalyses the reaction L-seryl-[protein] + ATP = O-phospho-L-seryl-[protein] + ADP + H(+). It carries out the reaction L-threonyl-[protein] + ATP = O-phospho-L-threonyl-[protein] + ADP + H(+). Its function is as follows. Serine/threonine kinase involved in various developmental processes. During early embryogenesis, acts as a survival protein. During mid-embryogenesis, phosphorylates and activates trh, a transcription factor required for tracheal cell fate determination. Also regulates tracheal cell migration. Later in development, acts downstream of PI3K and Pk61C/PDK1 in the insulin receptor transduction pathway which regulates cell growth and organ size, by phosphorylating and antagonizing FOXO transcription factor. Controls follicle cell size during oogenesis. May also stimulate cell growth by phosphorylating Gig/Tsc2 and inactivating the Tsc complex. Dephosphorylation of 'Ser-586' by Phlpp triggers apoptosis and suppression of tumor growth. This Drosophila melanogaster (Fruit fly) protein is RAC serine/threonine-protein kinase.